The primary structure comprises 230 residues: MNTTIIWHGHSNFQINANGISVLIDPFFTNNPRCTKNWNEIQKPDIVLITHDHSDHLGDAIAICKSTGALCGCIVGTADKLIQQGMPQHLIIGEIGFNIGGTIERKGVRITMTQSFHTSESGSPAGYIITMPNNFTLYHPGDTGIFQTMKTFGKLYNLHLSLLPIGGFFTMDSYQAAYAAKMLKCKMVIPMHWGTFPVLEQTPERFKNYLKAMAPECKYIAMEPNTSKEL.

This sequence belongs to the UPF0173 family.

The protein is UPF0173 metal-dependent hydrolase LI0883 of Lawsonia intracellularis (strain PHE/MN1-00).